The following is a 92-amino-acid chain: Small ribosomal subunit protein uS19 (92 aa).

Belongs to the universal ribosomal protein uS19 family.

Functionally, protein S19 forms a complex with S13 that binds strongly to the 16S ribosomal RNA. This Phenylobacterium zucineum (strain HLK1) protein is Small ribosomal subunit protein uS19.